The chain runs to 159 residues: Ribosomal RNA large subunit methyltransferase H (159 aa).

S-adenosyl-L-methionine is bound by residues Leu-76, Gly-108, and 127–132 (FGLLTL).

Belongs to the RNA methyltransferase RlmH family. In terms of assembly, homodimer.

Its subcellular location is the cytoplasm. It catalyses the reaction pseudouridine(1915) in 23S rRNA + S-adenosyl-L-methionine = N(3)-methylpseudouridine(1915) in 23S rRNA + S-adenosyl-L-homocysteine + H(+). Its function is as follows. Specifically methylates the pseudouridine at position 1915 (m3Psi1915) in 23S rRNA. This Streptococcus equi subsp. zooepidemicus (strain H70) protein is Ribosomal RNA large subunit methyltransferase H.